Here is a 273-residue protein sequence, read N- to C-terminus: NADPH-dependent 7-cyano-7-deazaguanine reductase (273 aa).

Ile80–Ser82 provides a ligand contact to substrate. Residue Ser82–Lys83 coordinates NADPH. Cys180 (thioimide intermediate) is an active-site residue. Asp187 functions as the Proton donor in the catalytic mechanism. Residue His219–Glu220 participates in substrate binding. Arg248–Gly249 contacts NADPH.

This sequence belongs to the GTP cyclohydrolase I family. QueF type 2 subfamily. As to quaternary structure, homodimer.

It localises to the cytoplasm. It carries out the reaction 7-aminomethyl-7-carbaguanine + 2 NADP(+) = 7-cyano-7-deazaguanine + 2 NADPH + 3 H(+). Its pathway is tRNA modification; tRNA-queuosine biosynthesis. Its function is as follows. Catalyzes the NADPH-dependent reduction of 7-cyano-7-deazaguanine (preQ0) to 7-aminomethyl-7-deazaguanine (preQ1). The polypeptide is NADPH-dependent 7-cyano-7-deazaguanine reductase (Bordetella avium (strain 197N)).